A 286-amino-acid polypeptide reads, in one-letter code: Pyridoxal kinase PdxY (286 aa).

Residues Ser-9 and 44-45 (TQ) each bind substrate. Positions 111, 148, and 181 each coordinate ATP. Asp-222 is a binding site for substrate.

It belongs to the pyridoxine kinase family. PdxY subfamily. Homodimer. Mg(2+) is required as a cofactor.

The catalysed reaction is pyridoxal + ATP = pyridoxal 5'-phosphate + ADP + H(+). Its pathway is cofactor metabolism; pyridoxal 5'-phosphate salvage; pyridoxal 5'-phosphate from pyridoxal: step 1/1. In terms of biological role, pyridoxal kinase involved in the salvage pathway of pyridoxal 5'-phosphate (PLP). Catalyzes the phosphorylation of pyridoxal to PLP. The polypeptide is Pyridoxal kinase PdxY (Actinobacillus pleuropneumoniae serotype 5b (strain L20)).